The following is a 174-amino-acid chain: Probasin (174 aa).

The first 18 residues, Met-1 to Ser-18, serve as a signal peptide directing secretion. A disulfide bridge links Cys-77 with Cys-168.

Belongs to the calycin superfamily. Lipocalin family.

Its subcellular location is the secreted. This Mus musculus (Mouse) protein is Probasin (Pbsn).